The primary structure comprises 439 residues: Na(+)/H(+) antiporter NhaA (439 aa).

The next 11 membrane-spanning stretches (helical) occupy residues Ser-12–Ala-32, Met-67–Ile-87, Ala-103–Ile-123, Gly-133–Gly-153, Ile-162–Phe-182, His-186–Gly-206, Ile-214–Ser-234, Ile-314–Val-334, Val-341–Ile-361, Gly-379–Phe-399, and Phe-412–Val-432.

It belongs to the NhaA Na(+)/H(+) (TC 2.A.33) antiporter family.

It localises to the cell inner membrane. The enzyme catalyses Na(+)(in) + 2 H(+)(out) = Na(+)(out) + 2 H(+)(in). In terms of biological role, na(+)/H(+) antiporter that extrudes sodium in exchange for external protons. This is Na(+)/H(+) antiporter NhaA from Bacteroides thetaiotaomicron (strain ATCC 29148 / DSM 2079 / JCM 5827 / CCUG 10774 / NCTC 10582 / VPI-5482 / E50).